A 296-amino-acid polypeptide reads, in one-letter code: Probable AP endonuclease (296 aa).

Cysteine 16 and cysteine 20 form a disulfide bridge. Zn(2+) contacts are provided by histidine 78, histidine 115, glutamate 142, histidine 182, histidine 218, aspartate 231, histidine 233, and glutamate 271.

This sequence belongs to the AP endonuclease 2 family. Zn(2+) serves as cofactor.

The protein localises to the host nucleus. Its subcellular location is the host cytoplasm. It localises to the virion. In terms of biological role, endonuclease that plays a role in DNA repair. Cleaves phosphodiester bonds on the 5' side of apurinic or apyrimidinic sites (AP sites). In addition to endonuclease activity, the ASFV enzyme has a proofreading 3'-5' exonuclease activity that is considerably more efficient in the elimination of a mismatch than in that of a correctly paired base. Displays 3'-phosphatase and 3'-repair diesterase activities. The single nucleotide gaps generated by the AP endonuclease are filled by the viral AP endonuclease and DNA ligase. This is Probable AP endonuclease from Ornithodoros (relapsing fever ticks).